The following is a 96-amino-acid chain: Large ribosomal subunit protein bL21 (96 aa).

It belongs to the bacterial ribosomal protein bL21 family. As to quaternary structure, part of the 50S ribosomal subunit. Contacts protein L20.

Its function is as follows. This protein binds to 23S rRNA in the presence of protein L20. This is Large ribosomal subunit protein bL21 from Prosthecochloris aestuarii (strain DSM 271 / SK 413).